The primary structure comprises 556 residues: CDP-diacylglycerol--glycerol-3-phosphate 3-phosphatidyltransferase, mitochondrial (556 aa).

The transit peptide at 1-28 (MAVAAAAAAGPVFWRRLLGLLPGRPGLA) directs the protein to the mitochondrion. S49 bears the Phosphoserine mark. Position 124–131 (124–131 (ASLYLGTG)) interacts with ATP. PLD phosphodiesterase domains lie at 215–241 (TIGL…SDSY) and 460–493 (RGWT…GYRS). Residues H220, K222, and D227 contribute to the active site.

It belongs to the CDP-alcohol phosphatidyltransferase class-II family.

It localises to the mitochondrion. The enzyme catalyses a CDP-1,2-diacyl-sn-glycerol + sn-glycerol 3-phosphate = a 1,2-diacyl-sn-glycero-3-phospho-(1'-sn-glycero-3'-phosphate) + CMP + H(+). It participates in phospholipid metabolism; phosphatidylglycerol biosynthesis; phosphatidylglycerol from CDP-diacylglycerol: step 1/2. Activated by calcium and magnesium and inhibited by other bivalent cations. Its function is as follows. Functions in the biosynthesis of the anionic phospholipids phosphatidylglycerol and cardiolipin. The protein is CDP-diacylglycerol--glycerol-3-phosphate 3-phosphatidyltransferase, mitochondrial (PGS1) of Homo sapiens (Human).